The following is a 142-amino-acid chain: Transcriptional regulator MraZ (142 aa).

SpoVT-AbrB domains are found at residues 5–51 and 77–120; these read ASAL…PRPE and AMDV…DAQT.

Belongs to the MraZ family. As to quaternary structure, forms oligomers.

The protein localises to the cytoplasm. It is found in the nucleoid. The chain is Transcriptional regulator MraZ from Paraburkholderia xenovorans (strain LB400).